The primary structure comprises 365 residues: Fructose-1,6-bisphosphate aldolase/phosphatase (365 aa).

Residue Asp-11 is the Proton acceptor; for FBP phosphatase activity of the active site. Positions 11, 18, 52, and 53 each coordinate Mg(2+). Beta-D-fructose 1,6-bisphosphate is bound at residue His-18. Residue His-18 participates in dihydroxyacetone phosphate binding. Tyr-90 contacts beta-D-fructose 1,6-bisphosphate. A Mg(2+)-binding site is contributed by Gln-94. Residue 103–104 (GN) coordinates beta-D-fructose 1,6-bisphosphate. Asp-131 contributes to the Mg(2+) binding site. Lys-132 lines the beta-D-fructose 1,6-bisphosphate pocket. Dihydroxyacetone phosphate is bound at residue Lys-132. Tyr-228 acts as the Proton donor/acceptor; for FBP aldolase activity in catalysis. Residues Lys-231, Asp-232, and Asp-233 each coordinate Mg(2+). The Schiff-base intermediate with DHAP; for FBP aldolase activity role is filled by Lys-231. Beta-D-fructose 1,6-bisphosphate is bound by residues 241 to 242 (QS), Arg-265, Asp-286, and Tyr-347. Dihydroxyacetone phosphate is bound by residues Arg-265 and Asp-286.

Belongs to the FBP aldolase/phosphatase family. Homooctamer; dimer of tetramers. Mg(2+) is required as a cofactor.

It catalyses the reaction beta-D-fructose 1,6-bisphosphate + H2O = beta-D-fructose 6-phosphate + phosphate. It carries out the reaction beta-D-fructose 1,6-bisphosphate = D-glyceraldehyde 3-phosphate + dihydroxyacetone phosphate. Its pathway is carbohydrate biosynthesis; gluconeogenesis. Its function is as follows. Catalyzes two subsequent steps in gluconeogenesis: the aldol condensation of dihydroxyacetone phosphate (DHAP) and glyceraldehyde-3-phosphate (GA3P) to fructose-1,6-bisphosphate (FBP), and the dephosphorylation of FBP to fructose-6-phosphate (F6P). The chain is Fructose-1,6-bisphosphate aldolase/phosphatase from Methanothermobacter marburgensis (strain ATCC BAA-927 / DSM 2133 / JCM 14651 / NBRC 100331 / OCM 82 / Marburg) (Methanobacterium thermoautotrophicum).